We begin with the raw amino-acid sequence, 321 residues long: Transaldolase (321 aa).

Catalysis depends on K132, which acts as the Schiff-base intermediate with substrate.

The protein belongs to the transaldolase family. Type 1 subfamily. As to quaternary structure, homodimer.

The protein localises to the cytoplasm. It catalyses the reaction D-sedoheptulose 7-phosphate + D-glyceraldehyde 3-phosphate = D-erythrose 4-phosphate + beta-D-fructose 6-phosphate. It participates in carbohydrate degradation; pentose phosphate pathway; D-glyceraldehyde 3-phosphate and beta-D-fructose 6-phosphate from D-ribose 5-phosphate and D-xylulose 5-phosphate (non-oxidative stage): step 2/3. In terms of biological role, transaldolase is important for the balance of metabolites in the pentose-phosphate pathway. The sequence is that of Transaldolase from Rhizobium leguminosarum bv. trifolii (strain WSM2304).